Here is a 305-residue protein sequence, read N- to C-terminus: Tyrosine recombinase XerC (305 aa).

The region spanning I4–E95 is the Core-binding (CB) domain. One can recognise a Tyr recombinase domain in the interval L116 to N298. Catalysis depends on residues R159, K182, H250, R253, and H276. Y285 acts as the O-(3'-phospho-DNA)-tyrosine intermediate in catalysis.

It belongs to the 'phage' integrase family. XerC subfamily. As to quaternary structure, forms a cyclic heterotetrameric complex composed of two molecules of XerC and two molecules of XerD.

Its subcellular location is the cytoplasm. In terms of biological role, site-specific tyrosine recombinase, which acts by catalyzing the cutting and rejoining of the recombining DNA molecules. The XerC-XerD complex is essential to convert dimers of the bacterial chromosome into monomers to permit their segregation at cell division. It also contributes to the segregational stability of plasmids. The polypeptide is Tyrosine recombinase XerC (Rickettsia typhi (strain ATCC VR-144 / Wilmington)).